Reading from the N-terminus, the 60-residue chain is Ras-related protein Rab-2A (60 aa).

GTP-binding residues include serine 1, cysteine 2, and threonine 19. Mg(2+) is bound at residue serine 1. Residues 16-24 (HDLTIGVEF) carry the Effector region motif. Threonine 19 lines the Mg(2+) pocket.

This sequence belongs to the small GTPase superfamily. Rab family. Interacts with PRKCI. Interacts with TRIP11. Interacts (in GTP-bound form) with GARIN1B. Interacts (GTP-bound) with HOPS complex component VPS39; interaction contributes to obtaining a functional HOPS complex that promotes autophagosome-lysosome membrane fusion driven by STX17-SNAP29-VAMP8. May interact with VPS41. Requires Mg(2+) as cofactor. Prenylated. Prenylation is required for association with cellular membranes.

It localises to the endoplasmic reticulum-Golgi intermediate compartment membrane. The protein resides in the melanosome. The protein localises to the endoplasmic reticulum membrane. Its subcellular location is the golgi apparatus membrane. It is found in the cytoplasmic vesicle. It localises to the secretory vesicle. The protein resides in the acrosome. The protein localises to the autophagosome membrane. It carries out the reaction GTP + H2O = GDP + phosphate + H(+). With respect to regulation, regulated by guanine nucleotide exchange factors (GEFs) which promote the exchange of bound GDP for free GTP, GTPase activating proteins (GAPs) which increase the GTP hydrolysis activity, and GDP dissociation inhibitors (GDIs) which inhibit the dissociation of the nucleotide from the GTPase. Its function is as follows. The small GTPases Rab are key regulators of intracellular membrane trafficking, from the formation of transport vesicles to their fusion with membranes. Rabs cycle between active GTP-bound and inactive GDP-bound states. In their active state, drive transport of vesicular carriers from donor organelles to acceptor organelles to regulate the membrane traffic that maintains organelle identity and morphology. RAB2A regulates autophagy by promoting autophagosome-lysosome fusion via recruitment of the HOPS endosomal tethering complex; this process involves autophagosomal RAB2A and lysosomal RAB39A recruitment of HOPS subcomplexes VPS39-VPS11 and VPS41-VPS16-VPS18-VPS33A, respectively, which assemble into a functional complex to mediate membrane tethering and SNAREs-driven membrane fusion. Required for protein transport from the endoplasmic reticulum to the Golgi complex. Regulates the compacted morphology of the Golgi. Together with RAB2B, redundantly required for efficient autophagic flux. The sequence is that of Ras-related protein Rab-2A from Mesocricetus auratus (Golden hamster).